Consider the following 205-residue polypeptide: Protein PAXX (205 aa).

In terms of domain architecture, PISA spans 39–81; sequence FNLYVTDAAELWSTCFSPDSLARLKARFGLSGAEDIHSRFRAA. A Phosphothreonine modification is found at T147. Residues 147 to 159 are compositionally biased toward polar residues; sequence TITSPKKNTQPAG. The disordered stretch occupies residues 147–205; that stretch reads TITSPKKNTQPAGTQFLPELDHQRGSSGPGVRRRCPGESLINPGFKSKKPAAGVDFDET. Phosphoserine is present on S150. The mediates interaction with XRCC5/Ku80 and XRCC6/Ku70 and association with the non-homologous end joining core complex stretch occupies residues 172-205; the sequence is SSGPGVRRRCPGESLINPGFKSKKPAAGVDFDET. Positions 191–205 match the XLM motif; that stretch reads FKSKKPAAGVDFDET.

The protein belongs to the XRCC4-XLF family. PAXX subfamily. In terms of assembly, homodimer. Interacts with the DNA-bound XRCC5/Ku80 and XRCC6/Ku70 heterodimer (Ku complex); the interaction is direct. Associated component of the non-homologous end joining (NHEJ) complex, composed of the core proteins PRKDC, LIG4, XRCC4, XRCC6/Ku70, XRCC5/Ku86 and NHEJ1/XLF. Interacts with POLL (DNA polymerase lambda); promoting POLL recruitment to double-strand breaks (DSBs) and stimulation of the end-filling activity of POLL. Phosphorylation may inhibit interaction with the DNA-bound XRCC5/Ku80 and XRCC6/Ku70 heterodimer (Ku complex).

It localises to the nucleus. It is found in the chromosome. Its function is as follows. Non-essential DNA repair protein involved in DNA non-homologous end joining (NHEJ); participates in double-strand break (DSB) repair and V(D)J recombination. May act as a scaffold required for accumulation of the Ku heterodimer, composed of XRCC5/Ku80 and XRCC6/Ku70, at double-strand break sites and promote the assembly and/or stability of the NHEJ machinery. Involved in NHEJ by promoting the ligation of blunt-ended DNA ends. Together with NHEJ1/XLF, collaborates with DNA polymerase lambda (POLL) to promote joining of non-cohesive DNA ends. Constitutes a non-essential component of classical NHEJ: has a complementary but distinct function with NHEJ1/XLF in DNA repair. The chain is Protein PAXX from Mus musculus (Mouse).